A 95-amino-acid polypeptide reads, in one-letter code: Aspartyl/glutamyl-tRNA(Asn/Gln) amidotransferase subunit C (95 aa).

This sequence belongs to the GatC family. In terms of assembly, heterotrimer of A, B and C subunits.

The catalysed reaction is L-glutamyl-tRNA(Gln) + L-glutamine + ATP + H2O = L-glutaminyl-tRNA(Gln) + L-glutamate + ADP + phosphate + H(+). The enzyme catalyses L-aspartyl-tRNA(Asn) + L-glutamine + ATP + H2O = L-asparaginyl-tRNA(Asn) + L-glutamate + ADP + phosphate + 2 H(+). Allows the formation of correctly charged Asn-tRNA(Asn) or Gln-tRNA(Gln) through the transamidation of misacylated Asp-tRNA(Asn) or Glu-tRNA(Gln) in organisms which lack either or both of asparaginyl-tRNA or glutaminyl-tRNA synthetases. The reaction takes place in the presence of glutamine and ATP through an activated phospho-Asp-tRNA(Asn) or phospho-Glu-tRNA(Gln). The chain is Aspartyl/glutamyl-tRNA(Asn/Gln) amidotransferase subunit C from Thioalkalivibrio sulfidiphilus (strain HL-EbGR7).